The following is a 696-amino-acid chain: UvrABC system protein B (696 aa).

The Helicase ATP-binding domain occupies 46–433 (EGVEDGLSFQ…SGQTAEQVVR (388 aa)). 59 to 66 (GVTGSGKT) serves as a coordination point for ATP. Positions 112 to 135 (YYDYYQPEAYVPQRDLFIEKDSSI) match the Beta-hairpin motif. The Helicase C-terminal domain maps to 450-616 (QVDDVLSEIT…GVVKRIKDII (167 aa)). In terms of domain architecture, UVR spans 647–682 (AKEIKRLEKQMADYAKNLEFEKAAQTRDQLALLRER).

It belongs to the UvrB family. As to quaternary structure, forms a heterotetramer with UvrA during the search for lesions. Interacts with UvrC in an incision complex.

It localises to the cytoplasm. Functionally, the UvrABC repair system catalyzes the recognition and processing of DNA lesions. A damage recognition complex composed of 2 UvrA and 2 UvrB subunits scans DNA for abnormalities. Upon binding of the UvrA(2)B(2) complex to a putative damaged site, the DNA wraps around one UvrB monomer. DNA wrap is dependent on ATP binding by UvrB and probably causes local melting of the DNA helix, facilitating insertion of UvrB beta-hairpin between the DNA strands. Then UvrB probes one DNA strand for the presence of a lesion. If a lesion is found the UvrA subunits dissociate and the UvrB-DNA preincision complex is formed. This complex is subsequently bound by UvrC and the second UvrB is released. If no lesion is found, the DNA wraps around the other UvrB subunit that will check the other stand for damage. This is UvrABC system protein B from Burkholderia mallei (strain ATCC 23344).